Reading from the N-terminus, the 88-residue chain is Transcription factor ILI5 (88 aa).

The 54-residue stretch at methionine 1–leucine 54 folds into the bHLH domain.

Belongs to the bHLH protein family. In terms of assembly, interacts with APG.

The protein resides in the nucleus. Functionally, atypical and probable non DNA-binding bHLH transcription factor that acts as a positive regulator of grain size. Binds the transcription repressor APG and forms a heterodimer of antagonistic basic helix-loop-helix transcription factors that regulates grain length and weight by controlling cell elongation in lemma and palea. This is Transcription factor ILI5 (ILI5) from Oryza sativa subsp. indica (Rice).